Here is a 266-residue protein sequence, read N- to C-terminus: Electron transfer flavoprotein subunit beta (266 aa).

The protein belongs to the ETF beta-subunit/FixA family. In terms of assembly, heterodimer of an alpha and a beta subunit. Requires FAD as cofactor. AMP is required as a cofactor.

Functionally, the electron transfer flavoprotein serves as a specific electron acceptor for other dehydrogenases. It transfers the electrons to the main respiratory chain via ETF-ubiquinone oxidoreductase (ETF dehydrogenase). This chain is Electron transfer flavoprotein subunit beta (etfB), found in Mycobacterium bovis (strain ATCC BAA-935 / AF2122/97).